Here is a 182-residue protein sequence, read N- to C-terminus: Pyruvoyl-dependent arginine decarboxylase (182 aa).

S44 is subject to Pyruvic acid (Ser).

This sequence belongs to the PdaD family. Pyruvate serves as cofactor.

It carries out the reaction L-arginine + H(+) = agmatine + CO2. The sequence is that of Pyruvoyl-dependent arginine decarboxylase from Thermoplasma volcanium (strain ATCC 51530 / DSM 4299 / JCM 9571 / NBRC 15438 / GSS1).